Consider the following 509-residue polypeptide: Glutamate--tRNA ligase (509 aa).

The 'HIGH' region signature appears at proline 20–threonine 30. Zn(2+) contacts are provided by cysteine 117, cysteine 119, cysteine 144, and histidine 146. Residues lysine 261–arginine 265 carry the 'KMSKS' region motif. Lysine 264 serves as a coordination point for ATP.

It belongs to the class-I aminoacyl-tRNA synthetase family. Glutamate--tRNA ligase type 1 subfamily. Monomer. Zn(2+) is required as a cofactor.

It localises to the cytoplasm. It carries out the reaction tRNA(Glu) + L-glutamate + ATP = L-glutamyl-tRNA(Glu) + AMP + diphosphate. Its function is as follows. Catalyzes the attachment of glutamate to tRNA(Glu) in a two-step reaction: glutamate is first activated by ATP to form Glu-AMP and then transferred to the acceptor end of tRNA(Glu). The protein is Glutamate--tRNA ligase of Psychrobacter cryohalolentis (strain ATCC BAA-1226 / DSM 17306 / VKM B-2378 / K5).